A 292-amino-acid chain; its full sequence is MVEVKKTTKTKSTEEKAPKITKATKEKTSDKTALKAKTPKTKVSDKAESTPKKASVKTSAKAEKINVEKTEKVEKVNVEKVSIKRESSSKDVQKADFSNIKELNSKIFEFEKNYDQAIFDCILSERASRRQGTHKVKNRAEVSGTGKKPWKQKGTGKARAGSLRNPIFVGGGRAFGPSVNRNYKISINKKVRLNALMASLFALAKSNSVLLKTFSLEKPSTKDLVEELRKINASNLKRILLVSDDKNIFLSARNLKNVKVTKVTSLMIEDLVAADLLILSNENIKYLEGLIK.

Composition is skewed to basic and acidic residues over residues 1–33 (MVEVKKTTKTKSTEEKAPKITKATKEKTSDKTA) and 42–51 (KVSDKAESTP). Disordered regions lie at residues 1 to 59 (MVEV…VKTS) and 132 to 158 (GTHKVKNRAEVSGTGKKPWKQKGTGKA).

It belongs to the universal ribosomal protein uL4 family. In terms of assembly, part of the 50S ribosomal subunit.

In terms of biological role, one of the primary rRNA binding proteins, this protein initially binds near the 5'-end of the 23S rRNA. It is important during the early stages of 50S assembly. It makes multiple contacts with different domains of the 23S rRNA in the assembled 50S subunit and ribosome. Forms part of the polypeptide exit tunnel. The sequence is that of Large ribosomal subunit protein uL4 from Mycoplasmopsis pulmonis (strain UAB CTIP) (Mycoplasma pulmonis).